Reading from the N-terminus, the 820-residue chain is Phosphoenolpyruvate synthase (820 aa).

The Tele-phosphohistidine intermediate role is filled by His-438. Residues Arg-539, Arg-587, Glu-689, Gly-710, Ser-711, Asn-712, and Asp-713 each contribute to the substrate site. Residue Glu-689 coordinates Mg(2+). Asp-713 lines the Mg(2+) pocket. Cys-762 serves as the catalytic Proton donor.

This sequence belongs to the PEP-utilizing enzyme family. Requires Mg(2+) as cofactor.

The catalysed reaction is pyruvate + ATP + H2O = phosphoenolpyruvate + AMP + phosphate + 2 H(+). It functions in the pathway carbohydrate biosynthesis; gluconeogenesis. In terms of biological role, catalyzes the phosphorylation of pyruvate to phosphoenolpyruvate. The sequence is that of Phosphoenolpyruvate synthase (ppsA) from Aeropyrum pernix (strain ATCC 700893 / DSM 11879 / JCM 9820 / NBRC 100138 / K1).